Reading from the N-terminus, the 292-residue chain is Nucleotide-binding protein Ldb0621 (292 aa).

ATP is bound at residue 14 to 21 (GMSGAGKT). 64-67 (DLRV) is a GTP binding site.

This sequence belongs to the RapZ-like family.

Displays ATPase and GTPase activities. This is Nucleotide-binding protein Ldb0621 from Lactobacillus delbrueckii subsp. bulgaricus (strain ATCC 11842 / DSM 20081 / BCRC 10696 / JCM 1002 / NBRC 13953 / NCIMB 11778 / NCTC 12712 / WDCM 00102 / Lb 14).